Consider the following 315-residue polypeptide: Cytosolic Fe-S cluster assembly factor nubp1-A (315 aa).

The tract at residues 1 to 23 (MADIPDNAPQHCPGTDSTEAGKS) is disordered. The [4Fe-4S] cluster site is built by Cys-12, Cys-26, Cys-29, and Cys-35. 66-73 (GKGGVGKS) lines the ATP pocket. Residues Cys-239 and Cys-242 each contribute to the [4Fe-4S] cluster site.

The protein belongs to the Mrp/NBP35 ATP-binding proteins family. NUBP1/NBP35 subfamily. Heterotetramer of 2 nubp1 and 2 nubp2 chains. It depends on [4Fe-4S] cluster as a cofactor.

It is found in the cytoplasm. Functionally, component of the cytosolic iron-sulfur (Fe/S) protein assembly (CIA) machinery. Required for maturation of extramitochondrial Fe-S proteins. The nubp1-nubp2 heterotetramer forms a Fe-S scaffold complex, mediating the de novo assembly of an Fe-S cluster and its transfer to target apoproteins. The polypeptide is Cytosolic Fe-S cluster assembly factor nubp1-A (nubp1-A) (Xenopus laevis (African clawed frog)).